The following is a 500-amino-acid chain: Lysine--tRNA ligase (500 aa).

2 residues coordinate Mg(2+): Glu-411 and Glu-418.

It belongs to the class-II aminoacyl-tRNA synthetase family. As to quaternary structure, homodimer. It depends on Mg(2+) as a cofactor.

The protein resides in the cytoplasm. The catalysed reaction is tRNA(Lys) + L-lysine + ATP = L-lysyl-tRNA(Lys) + AMP + diphosphate. This Actinobacillus pleuropneumoniae serotype 7 (strain AP76) protein is Lysine--tRNA ligase.